Here is a 114-residue protein sequence, read N- to C-terminus: Transmembrane protein 256 homolog (114 aa).

The N-terminal stretch at Met-1–Gly-25 is a signal peptide. Over Ala-26–Arg-64 the chain is Extracellular. Residues Pro-65 to Tyr-85 form a helical membrane-spanning segment. At Gln-86–Thr-93 the chain is on the cytoplasmic side. The chain crosses the membrane as a helical span at residues Leu-94–Leu-114.

This sequence belongs to the TMEM256 family.

The protein localises to the cell membrane. The chain is Transmembrane protein 256 homolog from Bufo gargarizans (Asian toad).